Reading from the N-terminus, the 255-residue chain is uncharacterized protein (255 aa).

Residues 253–255 carry the Microbody targeting signal motif; sequence SKI.

It belongs to the enoyl-CoA hydratase/isomerase family.

Its subcellular location is the peroxisome. This is an uncharacterized protein from Caenorhabditis elegans.